We begin with the raw amino-acid sequence, 1093 residues long: Phosphorylase b kinase regulatory subunit beta (1093 aa).

Ala-2 bears the N-acetylalanine mark. Residue Ala-4 is modified to Phosphoserine. The interval 7 to 29 (LTAEVSWKVLERRARTKRSGSVY) is calmodulin-binding. A Phosphoserine; by autocatalysis modification is found at Ser-12. Phosphoserine is present on residues Ser-27 and Ser-701. Positions 689–716 (EPPKHSKVKRQSSTPSAPELGQQPDVNI) are disordered. 2 calmodulin-binding regions span residues 768–795 (RVYRRAGSQKLWLAVRYGAAFTQKFSSS) and 920–951 (NGRCWLNRRQIDGSLNRTPTGFYDRVWQILER). Cys-1090 is lipidated: S-farnesyl cysteine.

Belongs to the phosphorylase b kinase regulatory chain family. As to quaternary structure, hexadecamer of 4 heterotetramers, each composed of alpha, beta, gamma, and delta subunits. Alpha (PHKA1 or PHKA2) and beta (PHKB) are regulatory subunits, gamma (PHKG1 or PHKG2) is the catalytic subunit, and delta is calmodulin. Ser-701 is probably phosphorylated by PKA. In terms of processing, although the final Cys may be farnesylated, the terminal tripeptide is probably not removed, and the C-terminus is not methylated.

The protein localises to the cell membrane. Its pathway is glycan biosynthesis; glycogen metabolism. With respect to regulation, by phosphorylation of various serine residues. Its function is as follows. Phosphorylase b kinase catalyzes the phosphorylation of serine in certain substrates, including troponin I. The beta chain acts as a regulatory unit and modulates the activity of the holoenzyme in response to phosphorylation. The chain is Phosphorylase b kinase regulatory subunit beta (PHKB) from Homo sapiens (Human).